A 468-amino-acid polypeptide reads, in one-letter code: 3-isopropylmalate dehydratase large subunit (468 aa).

[4Fe-4S] cluster contacts are provided by Cys-349, Cys-409, and Cys-412.

It belongs to the aconitase/IPM isomerase family. LeuC type 1 subfamily. In terms of assembly, heterodimer of LeuC and LeuD. The cofactor is [4Fe-4S] cluster.

The enzyme catalyses (2R,3S)-3-isopropylmalate = (2S)-2-isopropylmalate. It participates in amino-acid biosynthesis; L-leucine biosynthesis; L-leucine from 3-methyl-2-oxobutanoate: step 2/4. Catalyzes the isomerization between 2-isopropylmalate and 3-isopropylmalate, via the formation of 2-isopropylmaleate. The polypeptide is 3-isopropylmalate dehydratase large subunit (Nitrobacter winogradskyi (strain ATCC 25391 / DSM 10237 / CIP 104748 / NCIMB 11846 / Nb-255)).